A 426-amino-acid polypeptide reads, in one-letter code: Serine--tRNA ligase (426 aa).

233-235 (TSE) contacts L-serine. 264–266 (RAE) is a binding site for ATP. Glutamate 287 lines the L-serine pocket. 351 to 354 (EISS) is an ATP binding site. Position 387 (serine 387) interacts with L-serine.

The protein belongs to the class-II aminoacyl-tRNA synthetase family. Type-1 seryl-tRNA synthetase subfamily. Homodimer. The tRNA molecule binds across the dimer.

It localises to the cytoplasm. It carries out the reaction tRNA(Ser) + L-serine + ATP = L-seryl-tRNA(Ser) + AMP + diphosphate + H(+). The enzyme catalyses tRNA(Sec) + L-serine + ATP = L-seryl-tRNA(Sec) + AMP + diphosphate + H(+). It participates in aminoacyl-tRNA biosynthesis; selenocysteinyl-tRNA(Sec) biosynthesis; L-seryl-tRNA(Sec) from L-serine and tRNA(Sec): step 1/1. Functionally, catalyzes the attachment of serine to tRNA(Ser). Is also able to aminoacylate tRNA(Sec) with serine, to form the misacylated tRNA L-seryl-tRNA(Sec), which will be further converted into selenocysteinyl-tRNA(Sec). This chain is Serine--tRNA ligase, found in Stenotrophomonas maltophilia (strain R551-3).